The following is a 118-amino-acid chain: NADH-quinone oxidoreductase subunit A (118 aa).

Helical transmembrane passes span 5–25 (FAAV…MMLM), 61–81 (FLYA…FPWA), and 90–110 (FAFI…WYAW).

The protein belongs to the complex I subunit 3 family. As to quaternary structure, NDH-1 is composed of 14 different subunits. Subunits NuoA, H, J, K, L, M, N constitute the membrane sector of the complex.

Its subcellular location is the cell membrane. It carries out the reaction a quinone + NADH + 5 H(+)(in) = a quinol + NAD(+) + 4 H(+)(out). In terms of biological role, NDH-1 shuttles electrons from NADH, via FMN and iron-sulfur (Fe-S) centers, to quinones in the respiratory chain. The immediate electron acceptor for the enzyme in this species is believed to be a menaquinone. Couples the redox reaction to proton translocation (for every two electrons transferred, four hydrogen ions are translocated across the cytoplasmic membrane), and thus conserves the redox energy in a proton gradient. The sequence is that of NADH-quinone oxidoreductase subunit A from Desulfitobacterium hafniense (strain Y51).